The primary structure comprises 399 residues: Chorismate synthase (399 aa).

NADP(+)-binding residues include Arg40 and Arg46. FMN is bound by residues 135–137, 256–257, Gly301, 316–320, and Arg342; these read RAS, QA, and KPIAT.

Belongs to the chorismate synthase family. In terms of assembly, homotetramer. It depends on FMNH2 as a cofactor.

The enzyme catalyses 5-O-(1-carboxyvinyl)-3-phosphoshikimate = chorismate + phosphate. It functions in the pathway metabolic intermediate biosynthesis; chorismate biosynthesis; chorismate from D-erythrose 4-phosphate and phosphoenolpyruvate: step 7/7. Catalyzes the anti-1,4-elimination of the C-3 phosphate and the C-6 proR hydrogen from 5-enolpyruvylshikimate-3-phosphate (EPSP) to yield chorismate, which is the branch point compound that serves as the starting substrate for the three terminal pathways of aromatic amino acid biosynthesis. This reaction introduces a second double bond into the aromatic ring system. The chain is Chorismate synthase from Paenarthrobacter aurescens (strain TC1).